The sequence spans 493 residues: tRNA(Ile)-lysidine synthase, chloroplastic (493 aa).

Position 68-73 (68-73 (SGGQDS)) interacts with ATP.

It belongs to the tRNA(Ile)-lysidine synthase family.

The protein localises to the plastid. The protein resides in the chloroplast. The catalysed reaction is cytidine(34) in tRNA(Ile2) + L-lysine + ATP = lysidine(34) in tRNA(Ile2) + AMP + diphosphate + H(+). Functionally, ligates lysine onto the cytidine present at position 34 of the AUA codon-specific tRNA(Ile) that contains the anticodon CAU, in an ATP-dependent manner. Cytidine is converted to lysidine, thus changing the amino acid specificity of the tRNA from methionine to isoleucine. The sequence is that of tRNA(Ile)-lysidine synthase, chloroplastic from Staurastrum punctulatum (Green alga).